The primary structure comprises 213 residues: Transcription antitermination protein NusB (213 aa).

The protein belongs to the NusB family.

Involved in transcription antitermination. Required for transcription of ribosomal RNA (rRNA) genes. Binds specifically to the boxA antiterminator sequence of the ribosomal RNA (rrn) operons. The protein is Transcription antitermination protein NusB of Picosynechococcus sp. (strain ATCC 27264 / PCC 7002 / PR-6) (Agmenellum quadruplicatum).